A 338-amino-acid chain; its full sequence is Nicotinate-nucleotide--dimethylbenzimidazole phosphoribosyltransferase (338 aa).

Residue Glu305 is the Proton acceptor of the active site.

Belongs to the CobT family.

The catalysed reaction is 5,6-dimethylbenzimidazole + nicotinate beta-D-ribonucleotide = alpha-ribazole 5'-phosphate + nicotinate + H(+). It functions in the pathway nucleoside biosynthesis; alpha-ribazole biosynthesis; alpha-ribazole from 5,6-dimethylbenzimidazole: step 1/2. Functionally, catalyzes the synthesis of alpha-ribazole-5'-phosphate from nicotinate mononucleotide (NAMN) and 5,6-dimethylbenzimidazole (DMB). The sequence is that of Nicotinate-nucleotide--dimethylbenzimidazole phosphoribosyltransferase from Rhizobium rhizogenes (strain K84 / ATCC BAA-868) (Agrobacterium radiobacter).